The following is a 466-amino-acid chain: 3-isopropylmalate dehydratase large subunit (466 aa).

Positions 347, 407, and 410 each coordinate [4Fe-4S] cluster.

It belongs to the aconitase/IPM isomerase family. LeuC type 1 subfamily. In terms of assembly, heterodimer of LeuC and LeuD. It depends on [4Fe-4S] cluster as a cofactor.

It catalyses the reaction (2R,3S)-3-isopropylmalate = (2S)-2-isopropylmalate. Its pathway is amino-acid biosynthesis; L-leucine biosynthesis; L-leucine from 3-methyl-2-oxobutanoate: step 2/4. Its function is as follows. Catalyzes the isomerization between 2-isopropylmalate and 3-isopropylmalate, via the formation of 2-isopropylmaleate. The chain is 3-isopropylmalate dehydratase large subunit from Escherichia coli O127:H6 (strain E2348/69 / EPEC).